Reading from the N-terminus, the 186-residue chain is MKDEHNQEHDLSQKELESCENSCTCEGKKQEASEKECEIKEDFELKYQEMHEKYLRVHADFENVKKRLERDKSMALEYAYEKIALDLLPVIDALLGAHKSASGDDKESALTKGLELTMEKLHEVLARHGIEGIECLEEFDPNFHNAIMQVKSEEKENGKIVQVLQQGYKYKGRVLRPAMVSIAKND.

A compositionally biased stretch (basic and acidic residues) spans 1-17; it reads MKDEHNQEHDLSQKELE. The segment at 1–32 is disordered; it reads MKDEHNQEHDLSQKELESCENSCTCEGKKQEA.

Belongs to the GrpE family. As to quaternary structure, homodimer.

The protein resides in the cytoplasm. In terms of biological role, participates actively in the response to hyperosmotic and heat shock by preventing the aggregation of stress-denatured proteins, in association with DnaK and GrpE. It is the nucleotide exchange factor for DnaK and may function as a thermosensor. Unfolded proteins bind initially to DnaJ; upon interaction with the DnaJ-bound protein, DnaK hydrolyzes its bound ATP, resulting in the formation of a stable complex. GrpE releases ADP from DnaK; ATP binding to DnaK triggers the release of the substrate protein, thus completing the reaction cycle. Several rounds of ATP-dependent interactions between DnaJ, DnaK and GrpE are required for fully efficient folding. This chain is Protein GrpE, found in Helicobacter acinonychis (strain Sheeba).